An 843-amino-acid polypeptide reads, in one-letter code: Histone-lysine N-methyltransferase PRDM9 (843 aa).

A KRAB-related domain is found at 23–86 (KVKDEFKDIS…QRQAMKPQIN (64 aa)). 2 disordered regions span residues 85–104 (INDS…VSPP) and 110–170 (VKHS…KKLK). Zn(2+)-binding residues include cysteine 205, cysteine 208, cysteine 216, and histidine 219. The 115-residue stretch at 244–358 (PGLRISPSGI…PGCELLVWYG (115 aa)) folds into the SET domain. S-adenosyl-L-methionine is bound by residues 256 to 258 (AGL), tyrosine 291, and 320 to 321 (NC). 288 to 294 (NSGYSWL) lines the substrate pocket. Tyrosine 357 contacts substrate. Lysine 368 bears the N6,N6,N6-trimethyllysine; alternate mark. Lysine 368 carries the N6-methyllysine; alternate modification. Lysine 372 and lysine 374 each carry N6-methyllysine. A C2H2-type 1 zinc finger spans residues 388–411 (HPCLLCSLAFSSQKFLTQHMEWNH). 4 residues coordinate Zn(2+): cysteine 390, cysteine 393, histidine 406, and histidine 411. Residues 418–493 (GTSARINPKP…VEELRTGQTT (76 aa)) are disordered. Positions 436–454 (QEQHVDSQNKNDKASNEVK) are enriched in basic and acidic residues. Positions 462–472 (RISTTFPSTLK) are enriched in polar residues. The segment covering 473 to 488 (EQMRSEESKRTVEELR) has biased composition (basic and acidic residues). The C2H2-type 2; degenerate zinc-finger motif lies at 513-531 (QCGQYFSDKSNVNEHQKTH). C2H2-type zinc fingers lie at residues 537–559 (YVCR…QRTH), 565–587 (YVCR…QRTH), 593–615 (YVCR…QRTH), 621–643 (YVCR…QRTH), 649–671 (YVCR…QRTH), 677–699 (YVCR…QRTH), 705–727 (YVCR…QRTH), 733–755 (YVCR…QRTH), 761–783 (YVCR…QRTH), 789–811 (YVCR…QRTH), and 817–839 (YVCR…QRTH). Zn(2+) is bound by residues cysteine 707, cysteine 710, histidine 723, histidine 727, cysteine 735, cysteine 738, histidine 751, histidine 755, cysteine 763, cysteine 766, histidine 779, histidine 783, cysteine 791, cysteine 794, histidine 807, and histidine 811. The DNA-binding stretch occupies residues 715–805 (TAKSNLIQHQ…RGFTQKSNLI (91 aa)).

This sequence belongs to the class V-like SAM-binding methyltransferase superfamily. As to quaternary structure, homodimer. Interacts with EHMT2 and CDYL; interaction only takes place when PRDM9 is bound to hotspot DNA. Interacts with CXXC1; this interaction does not link PRDM9-activated recombination hotspot sites with DSB machinery and is not required for the hotspot recognition pathway. Forms a complex with EWSR1, REC8, SYCP3 and SYCP1; complex formation is dependent of phosphorylated form of REC8 and requires PRDM9 bound to hotspot DNA; EWSR1 joins PRDM9 with the chromosomal axis through REC8. In terms of processing, mono-methylated; automethylated. Tri-methylated; automethylated. Mono-methylation is predominant; automethylation is lower and slower than H3 peptide methylation and is in a highest S-adenosyl-L-methionine concentration-dependent. There are two major sites for automethylation at Lys-368 and Lys-374. Lysines can be simultaneously methylated, such as Lys-368(me3)/Lys-372(me1), Lys-368(me1)/Lys-374(me1) and Lys-368(me1)/Lys-372(me1)/Lys-374(me1). Automethylation is an intramolecular (cis) process. In terms of tissue distribution, specifically expressed in germ cells entering meiotic prophase in female fetal gonads and in postnatal testis. Expressed in early meiotic prophase.

Its subcellular location is the nucleus. It localises to the chromosome. The catalysed reaction is L-lysyl-[protein] + S-adenosyl-L-methionine = N(6)-methyl-L-lysyl-[protein] + S-adenosyl-L-homocysteine + H(+). The enzyme catalyses N(6),N(6)-dimethyl-L-lysyl-[protein] + S-adenosyl-L-methionine = N(6),N(6),N(6)-trimethyl-L-lysyl-[protein] + S-adenosyl-L-homocysteine + H(+). It catalyses the reaction L-lysyl(4)-[histone H3] + 3 S-adenosyl-L-methionine = N(6),N(6),N(6)-trimethyl-L-lysyl(4)-[histone H3] + 3 S-adenosyl-L-homocysteine + 3 H(+). It carries out the reaction L-lysyl(36)-[histone H3] + 3 S-adenosyl-L-methionine = N(6),N(6),N(6)-trimethyl-L-lysyl(36)-[histone H3] + 3 S-adenosyl-L-homocysteine + 3 H(+). The catalysed reaction is L-lysyl(9)-[histone H3] + 3 S-adenosyl-L-methionine = N(6),N(6),N(6)-trimethyl-L-lysyl(9)-[histone H3] + 3 S-adenosyl-L-homocysteine + 3 H(+). The enzyme catalyses L-lysyl(20)-[histone H4] + S-adenosyl-L-methionine = N(6)-methyl-L-lysyl(20)-[histone H4] + S-adenosyl-L-homocysteine + H(+). It catalyses the reaction N(6)-methyl-L-lysyl(20)-[histone H4] + S-adenosyl-L-methionine = N(6),N(6)-dimethyl-L-lysyl(20)-[histone H4] + S-adenosyl-L-homocysteine + H(+). Its function is as follows. Histone methyltransferase that sequentially mono-, di-, and tri-methylates both 'Lys-4' (H3K4) and 'Lys-36' (H3K36) of histone H3 to produce respectively trimethylated 'Lys-4' (H3K4me3) and trimethylated 'Lys-36' (H3K36me3) histone H3 and plays a key role in meiotic prophase by determining hotspot localization thereby promoting meiotic recombination. Can also methylate all four core histones with H3 being the best substrate and the most highly modified. Is also able, on one hand, to mono and di-methylate H4K20 and on other hand to trimethylate H3K9 with the di-methylated H3K9 as the best substrate. During meiotic prophase, binds specific DNA sequences through its zinc finger domains thereby determining hotspot localization where it promotes local H3K4me3 and H3K36me3 enrichment on the same nucleosomes through its histone methyltransferase activity. Thereby promotes double-stranded breaks (DSB) formation, at this subset of PRDM9-binding sites, that initiates meiotic recombination for the proper meiotic progression. During meiotic progression hotspot-bound PRDM9 interacts with several complexes; in early leptonema binds CDYL and EHMT2 followed by EWSR1 and CXXC1 by the end of leptonema. EWSR1 joins PRDM9 with the chromosomal axis through REC8. In this way, controls the DSB repair pathway, pairing of homologous chromosomes and sex body formation. Moreover plays a central role in the transcriptional activation of genes during early meiotic prophase thanks to H3K4me3 and H3K36me3 enrichment that represents a specific tag for epigenetic transcriptional activation. In addition performs automethylation. Acetylation and phosphorylation of histone H3 attenuate or prevent histone H3 methylation. This is Histone-lysine N-methyltransferase PRDM9 from Mus musculus (Mouse).